Here is a 475-residue protein sequence, read N- to C-terminus: Lipoprotein lipase (475 aa).

Residues 1 to 27 form the signal peptide; sequence MESKALLLLALAVWLQSLTASRGGVAA. The interval 32–53 is interaction with GPIHBP1; it reads RDFIDIESKFALRTPEDTAEDT. The cysteines at positions 54 and 67 are disulfide-linked. A glycan (N-linked (GlcNAc...) asparagine) is linked at asparagine 70. Tyrosine 121 bears the 3'-nitrotyrosine mark. Residue serine 159 is the Nucleophile of the active site. The active-site Charge relay system is the aspartate 183. A 3'-nitrotyrosine modification is found at tyrosine 191. Ca(2+) contacts are provided by alanine 194, arginine 197, serine 199, and aspartate 202. A disulfide bridge links cysteine 243 with cysteine 266. Positions 243–266 are essential for determining substrate specificity; that stretch reads CNIGEAIRVIAERGLGDVDQLVKC. Histidine 268 functions as the Charge relay system in the catalytic mechanism. 2 cysteine pairs are disulfide-bonded: cysteine 291/cysteine 310 and cysteine 302/cysteine 305. The region spanning 341–464 is the PLAT domain; it reads FHYQVKIHFS…KGKAPAVFVK (124 aa). Tyrosine 343 bears the 3'-nitrotyrosine mark. Asparagine 386 carries N-linked (GlcNAc...) asparagine glycosylation. The important for interaction with lipoprotein particles stretch occupies residues 417-421; it reads WSDWW. The tract at residues 430–434 is important for heparin binding; sequence KIRVK. The segment at 443-467 is interaction with GPIHBP1; that stretch reads IFCSREKVSHLQKGKAPAVFVKCHD. Cysteines 445 and 465 form a disulfide.

Belongs to the AB hydrolase superfamily. Lipase family. Homodimer. Interacts with GPIHBP1 with 1:1 stoichiometry. Interacts with APOC2; the interaction activates LPL activity in the presence of lipids. Interaction with heparan sulfate proteoglycans is required to protect LPL against loss of activity. Associates with lipoprotein particles in blood plasma. Interacts with LMF1 and SEL1L; interaction with SEL1L is required to prevent aggregation of newly synthesized LPL in the endoplasmic reticulum (ER), and for normal export of LPL from the ER to the extracellular space. Interacts with SORL1; SORL1 acts as a sorting receptor, promoting LPL localization to endosomes and later to lysosomes, leading to degradation of newly synthesized LPL. Tyrosine nitration after lipopolysaccharide (LPS) challenge down-regulates the lipase activity. Highest levels in the spinal cord.

The protein localises to the cell membrane. The protein resides in the secreted. Its subcellular location is the extracellular space. It localises to the extracellular matrix. It carries out the reaction a triacylglycerol + H2O = a diacylglycerol + a fatty acid + H(+). The enzyme catalyses a 1,2-diacyl-sn-glycero-3-phosphocholine + H2O = a 2-acyl-sn-glycero-3-phosphocholine + a fatty acid + H(+). It catalyses the reaction 1,2,3-tri-(9Z-octadecenoyl)-glycerol + H2O = di-(9Z)-octadecenoylglycerol + (9Z)-octadecenoate + H(+). The catalysed reaction is 1,2-di-(9Z-octadecenoyl)-sn-glycero-3-phosphocholine + H2O = (9Z-octadecenoyl)-sn-glycero-3-phosphocholine + (9Z)-octadecenoate + H(+). It carries out the reaction 1,2,3-tributanoylglycerol + H2O = dibutanoylglycerol + butanoate + H(+). The enzyme catalyses 1,2-dihexadecanoyl-sn-glycero-3-phosphocholine + H2O = hexadecanoyl-sn-glycero-3-phosphocholine + hexadecanoate + H(+). The apolipoprotein APOC2 acts as a coactivator of LPL activity. Ca(2+) binding promotes protein stability and formation of the active homodimer. Interaction with GPIHBP1 protects LPL against inactivation by ANGPTL4. Its function is as follows. Key enzyme in triglyceride metabolism. Catalyzes the hydrolysis of triglycerides from circulating chylomicrons and very low density lipoproteins (VLDL), and thereby plays an important role in lipid clearance from the blood stream, lipid utilization and storage. Although it has both phospholipase and triglyceride lipase activities it is primarily a triglyceride lipase with low but detectable phospholipase activity. Mediates margination of triglyceride-rich lipoprotein particles in capillaries. Recruited to its site of action on the luminal surface of vascular endothelium by binding to GPIHBP1 and cell surface heparan sulfate proteoglycans. This Papio anubis (Olive baboon) protein is Lipoprotein lipase (LPL).